Consider the following 83-residue polypeptide: U5-theraphotoxin-Hs1a 6 (83 aa).

An N-terminal signal peptide occupies residues 1 to 21; sequence MKTSMFLTLTGLVLLFVVCYA. Residues 22 to 49 constitute a propeptide that is removed on maturation; that stretch reads SESEEKEFPKELLSSIFAADSDFKVEER. 3 disulfides stabilise this stretch: cysteine 51–cysteine 63, cysteine 56–cysteine 68, and cysteine 62–cysteine 75.

It belongs to the neurotoxin 10 (Hwtx-1) family. 51 (Hntx-8) subfamily. Hntx-8 sub-subfamily. Expressed by the venom gland.

It localises to the secreted. Functionally, agglutinates erythrocytes. The protein is U5-theraphotoxin-Hs1a 6 of Cyriopagopus schmidti (Chinese bird spider).